The primary structure comprises 299 residues: Probable lipid kinase YegS (299 aa).

The region spanning 2–133 (ANFPASLLIL…IDMARVNDKT (132 aa)) is the DAGKc domain. ATP contacts are provided by residues T40, 66–72 (GDGTINE), and T95. Residues L215, D218, and L220 each contribute to the Mg(2+) site. The active-site Proton acceptor is E271.

Belongs to the diacylglycerol/lipid kinase family. YegS lipid kinase subfamily. Mg(2+) serves as cofactor. It depends on Ca(2+) as a cofactor.

It localises to the cytoplasm. In terms of biological role, probably phosphorylates lipids; the in vivo substrate is unknown. This chain is Probable lipid kinase YegS, found in Salmonella newport (strain SL254).